Here is a 237-residue protein sequence, read N- to C-terminus: Endonuclease V (237 aa).

2 residues coordinate Mg(2+): Asp-46 and Asp-114.

This sequence belongs to the endonuclease V family. The cofactor is Mg(2+).

The protein resides in the cytoplasm. It catalyses the reaction Endonucleolytic cleavage at apurinic or apyrimidinic sites to products with a 5'-phosphate.. In terms of biological role, DNA repair enzyme involved in the repair of deaminated bases. Selectively cleaves double-stranded DNA at the second phosphodiester bond 3' to a deoxyinosine leaving behind the intact lesion on the nicked DNA. The chain is Endonuclease V from Xanthomonas axonopodis pv. citri (strain 306).